We begin with the raw amino-acid sequence, 271 residues long: Serine protease SP24D (271 aa).

The first 22 residues, 1-22 (MTLADRVPLALAALAYLALVSG), serve as a signal peptide directing secretion. A propeptide spans 23–49 (VRFHLSEQNDVLPGGSQARRPFFQGAR) (activation peptide). One can recognise a Peptidase S1 domain in the interval 50–269 (IVGGSVASEG…FVTWIQTTMR (220 aa)). Cys75 and Cys91 are disulfide-bonded. Catalysis depends on charge relay system residues His90 and Asp136. 2 disulfide bridges follow: Cys199/Cys211 and Cys221/Cys246. Catalysis depends on Ser225, which acts as the Charge relay system.

The protein belongs to the peptidase S1 family. Highest level of adult expression is in the thorax.

The protein is Serine protease SP24D (Sp24D) of Anopheles gambiae (African malaria mosquito).